We begin with the raw amino-acid sequence, 479 residues long: UDP-glucose flavonoid 3-O-glucosyltransferase 6 (479 aa).

The active-site Proton acceptor is histidine 17. Histidine 17 contributes to the an anthocyanidin binding site. The Charge relay role is filled by aspartate 121. Threonine 143, alanine 354, glutamine 356, histidine 371, tryptophan 374, asparagine 375, serine 376, and glutamate 379 together coordinate UDP-alpha-D-glucose. Residue alanine 394 coordinates an anthocyanidin. Residues glutamate 395 and glutamine 396 each coordinate UDP-alpha-D-glucose. Residues 454–479 form a disordered region; sequence MSRKALEEDGSSYSSLGRFLDQIQTS.

It belongs to the UDP-glycosyltransferase family. Strongly expressed in achenes, with lower expression levels detected in receptacles.

It catalyses the reaction a flavonol + UDP-alpha-D-glucose = a flavonol 3-O-beta-D-glucoside + UDP + H(+). Broad spectrum multifunctional glucosyltransferase. Catalyzes the formation of flavonol 3-O-glucosides during fruit ripening. Accepted substrates include several flavonoids, hydroxycoumarins and beta-naphthols. Uses UDP-Glc as a sugar donor, but not UDP-Gal or UDP-GlcUA. May also be involved in detoxification of xenobiotics. The protein is UDP-glucose flavonoid 3-O-glucosyltransferase 6 of Fragaria ananassa (Strawberry).